The chain runs to 425 residues: MKLIKNGKILKNGILKDTEILIDGKRIKQISSKINASSSNIEVIDAKGNLIAPGFVDVHVHLREPGGEHKETIESGTKAAARGGFTTVCPMPNTRPVPDTVEHVRELRQRISETAQVRVLPYAAITKRQAGTELVDFEKLALEGVFAFTDDGVGVQTASMMYAAMKQAVKVKKPIVAHCEDNSLIYGGAMHKGKRSEELGIPGIPNIAESVQIARDVLLAEATGCHYHVCHVSTKESVRVIRDAKKAGIHVTAEVTPHHLLLTENDVPGDDSNYKMNPPLRSNEDREALLEGLLDGTIDCIATDHAPHAKEEKAQPMTKAPFGIVGSETAFPLLYTHFVRRGNWSLQQLVDYFTIKPATIFNLNYGKLHKDSYADLTIIDLNTEKEIKSEDFLSKADNTPFIGEKVYGNPTLTMLKGEVVFEEEK.

Zn(2+) contacts are provided by His59 and His61. Residues 61–63 (HLR) and Asn93 each bind substrate. The Zn(2+) site is built by Asp151, His178, and His231. Substrate is bound at residue Asn277. Asp304 contributes to the Zn(2+) binding site. The active site involves Asp304. Substrate contacts are provided by residues His308 and 322 to 323 (FG).

It belongs to the metallo-dependent hydrolases superfamily. DHOase family. Class I DHOase subfamily. The cofactor is Zn(2+).

It carries out the reaction (S)-dihydroorotate + H2O = N-carbamoyl-L-aspartate + H(+). It functions in the pathway pyrimidine metabolism; UMP biosynthesis via de novo pathway; (S)-dihydroorotate from bicarbonate: step 3/3. Functionally, catalyzes the reversible cyclization of carbamoyl aspartate to dihydroorotate. This is Dihydroorotase from Staphylococcus epidermidis (strain ATCC 12228 / FDA PCI 1200).